Here is a 457-residue protein sequence, read N- to C-terminus: tRNA modification GTPase MnmE (457 aa).

3 residues coordinate (6S)-5-formyl-5,6,7,8-tetrahydrofolate: arginine 25, glutamate 87, and arginine 126. The TrmE-type G domain maps to 223-377; the sequence is GIATAIIGRP…IEEKINQLFF (155 aa). Asparagine 233 contacts K(+). Residues 233-238, 252-258, and 277-280 each bind GTP; these read NVGKSS, TDIAGTT, and DTAG. Serine 237 contacts Mg(2+). The K(+) site is built by threonine 252, isoleucine 254, and threonine 257. Residue threonine 258 participates in Mg(2+) binding. A (6S)-5-formyl-5,6,7,8-tetrahydrofolate-binding site is contributed by lysine 457.

It belongs to the TRAFAC class TrmE-Era-EngA-EngB-Septin-like GTPase superfamily. TrmE GTPase family. In terms of assembly, homodimer. Heterotetramer of two MnmE and two MnmG subunits. The cofactor is K(+).

It is found in the cytoplasm. Exhibits a very high intrinsic GTPase hydrolysis rate. Involved in the addition of a carboxymethylaminomethyl (cmnm) group at the wobble position (U34) of certain tRNAs, forming tRNA-cmnm(5)s(2)U34. This chain is tRNA modification GTPase MnmE, found in Streptococcus suis (strain 98HAH33).